Consider the following 107-residue polypeptide: Phosphoribosyl-ATP pyrophosphatase (107 aa).

The protein belongs to the PRA-PH family.

The protein resides in the cytoplasm. It catalyses the reaction 1-(5-phospho-beta-D-ribosyl)-ATP + H2O = 1-(5-phospho-beta-D-ribosyl)-5'-AMP + diphosphate + H(+). The protein operates within amino-acid biosynthesis; L-histidine biosynthesis; L-histidine from 5-phospho-alpha-D-ribose 1-diphosphate: step 2/9. The sequence is that of Phosphoribosyl-ATP pyrophosphatase from Caulobacter sp. (strain K31).